The primary structure comprises 65 residues: Alpha-toxin OD1 (65 aa).

The region spanning 3–65 (RDAYIADDKN…VPIRIPGKCR (63 aa)) is the LCN-type CS-alpha/beta domain. The Important for toxin selectivity for individual Nav channel subtype (Nav1.6/SCN8A and Nav1.7/SCN9A), but not for toxin potency signature appears at 9-11 (DDK). 4 disulfides stabilise this stretch: C13/C64, C17/C37, C23/C47, and C27/C49. R65 bears the Arginine amide mark.

The protein belongs to the long (4 C-C) scorpion toxin superfamily. Sodium channel inhibitor family. Alpha subfamily. As to expression, expressed by the venom gland.

The protein resides in the secreted. Functionally, alpha toxins bind voltage-independently at site-3 of sodium channels and inhibit the inactivation of the activated channels. The toxin affect mammalian sodium channels Nav1.7/SCN9A (EC(50)=4.5 nM), Nav1.4/SCN4A (EC(50)=9.6 nM), Nav1.6/SCN8A (EC(50)=30 nM), Nav1.5/SCN5A (only at micromolar concentrations), and insect sodium channel para/tipE (EC(50)=80 nM). In vivo, intraplantar administration of this toxin elicits pain behaviors, including licking and flinching of the hind paw. In Odontobuthus doriae (Yellow Iranian scorpion), this protein is Alpha-toxin OD1.